We begin with the raw amino-acid sequence, 224 residues long: UPF0758 protein VSAL_I0192 (224 aa).

Residues 102-224 (ALTSPEHTKR…IVSFAERGWI (123 aa)) enclose the MPN domain. Positions 173, 175, and 186 each coordinate Zn(2+). Positions 173–186 (HNHPSGVAEPSQAD) match the JAMM motif motif.

It belongs to the UPF0758 family.

The protein is UPF0758 protein VSAL_I0192 of Aliivibrio salmonicida (strain LFI1238) (Vibrio salmonicida (strain LFI1238)).